The chain runs to 124 residues: Protein Rev (124 aa).

The residue at position 5 (S5) is a Phosphoserine; by host CK2. Residues 19 to 27 (IIKILYQSN) form a homomultimerization region. Positions 25-51 (QSNPYPSPEGTRKARRNRRRRWRARQK) are disordered. The Nuclear localization signal and RNA-binding (RRE) signature appears at 35–51 (TRKARRNRRRRWRARQK). Positions 37–50 (KARRNRRRRWRARQ) are enriched in basic residues. A Nuclear export signal and binding to XPO1 motif is present at residues 74–85 (LELPELDKLSLQ). Residues 90–106 (TQDVGTSNTSQPQTATG) are compositionally biased toward polar residues. A disordered region spans residues 90–124 (TQDVGTSNTSQPQTATGETVPAGGNYSILGKGAKN).

Belongs to the HIV-1 REV protein family. In terms of assembly, homomultimer; when bound to the RRE. Multimeric assembly is essential for activity and may involve XPO1. Binds to human KPNB1, XPO1, TNPO1, RANBP5 and IPO7. Interacts with the viral Integrase. Interacts with human KHDRBS1. Interacts with human NAP1; this interaction decreases Rev multimerization and stimulates its activity. Interacts with human DEAD-box helicases DDX3 and DDX24; these interactions may serve for viral RNA export to the cytoplasm and packaging, respectively. Interacts with human PSIP1; this interaction may inhibit HIV-1 DNA integration by promoting dissociation of the Integrase-LEDGF/p75 complex. Post-translationally, asymmetrically arginine dimethylated at one site by host PRMT6. Methylation impairs the RNA-binding activity and export of viral RNA from the nucleus to the cytoplasm. Phosphorylated by protein kinase CK2. Presence of, and maybe binding to the N-terminus of the regulatory beta subunit of CK2 is necessary for CK2-mediated Rev's phosphorylation.

Its subcellular location is the host nucleus. It localises to the host nucleolus. It is found in the host cytoplasm. Its function is as follows. Escorts unspliced or incompletely spliced viral pre-mRNAs (late transcripts) out of the nucleus of infected cells. These pre-mRNAs carry a recognition sequence called Rev responsive element (RRE) located in the env gene, that is not present in fully spliced viral mRNAs (early transcripts). This function is essential since most viral proteins are translated from unspliced or partially spliced pre-mRNAs which cannot exit the nucleus by the pathway used by fully processed cellular mRNAs. Rev itself is translated from a fully spliced mRNA that readily exits the nucleus. Rev's nuclear localization signal (NLS) binds directly to KPNB1/Importin beta-1 without previous binding to KPNA1/Importin alpha-1. KPNB1 binds to the GDP bound form of RAN (Ran-GDP) and targets Rev to the nucleus. In the nucleus, the conversion from Ran-GDP to Ran-GTP dissociates Rev from KPNB1 and allows Rev's binding to the RRE in viral pre-mRNAs. Rev multimerization on the RRE via cooperative assembly exposes its nuclear export signal (NES) to the surface. Rev can then form a complex with XPO1/CRM1 and Ran-GTP, leading to nuclear export of the complex. Conversion from Ran-GTP to Ran-GDP mediates dissociation of the Rev/RRE/XPO1/RAN complex, so that Rev can return to the nucleus for a subsequent round of export. Beside KPNB1, also seems to interact with TNPO1/Transportin-1, RANBP5/IPO5 and IPO7/RANBP7 for nuclear import. The nucleoporin-like HRB/RIP is an essential cofactor that probably indirectly interacts with Rev to release HIV RNAs from the perinuclear region to the cytoplasm. In Pan (chimpanzees), this protein is Protein Rev.